Here is a 312-residue protein sequence, read N- to C-terminus: F-box protein At1g11270 (312 aa).

Residues 29 to 80 form the F-box domain; that stretch reads SVVKLLLPHDVVGLILERLPVESLLRFKCVSNQWKSTIESQCFQERQLIRRM.

The polypeptide is F-box protein At1g11270 (Arabidopsis thaliana (Mouse-ear cress)).